We begin with the raw amino-acid sequence, 286 residues long: Bifunctional protein FolD (286 aa).

NADP(+) is bound by residues 165–167 (GRS) and serine 190.

The protein belongs to the tetrahydrofolate dehydrogenase/cyclohydrolase family. As to quaternary structure, homodimer.

It carries out the reaction (6R)-5,10-methylene-5,6,7,8-tetrahydrofolate + NADP(+) = (6R)-5,10-methenyltetrahydrofolate + NADPH. The enzyme catalyses (6R)-5,10-methenyltetrahydrofolate + H2O = (6R)-10-formyltetrahydrofolate + H(+). Its pathway is one-carbon metabolism; tetrahydrofolate interconversion. Its function is as follows. Catalyzes the oxidation of 5,10-methylenetetrahydrofolate to 5,10-methenyltetrahydrofolate and then the hydrolysis of 5,10-methenyltetrahydrofolate to 10-formyltetrahydrofolate. This chain is Bifunctional protein FolD, found in Staphylococcus epidermidis (strain ATCC 12228 / FDA PCI 1200).